A 467-amino-acid polypeptide reads, in one-letter code: Cruzipain (467 aa).

A signal peptide spans 1–18 (MSGWARALLLAAVLVVMA). Residues 19-122 (CLVPAATASL…RVPVKVEVVG (104 aa)) constitute a propeptide, activation peptide. Cystine bridges form between C144–C185, C178–C223, and C277–C325. Residue C147 is part of the active site. The N-linked (GlcNAc...) asparagine glycan is linked to N169. The active site involves H284. The N-linked (GlcNAc...) asparagine glycan is linked to N292. Residue N304 is part of the active site. The segment at 333-355 (SAVVGGPGPTPEPTTTTTTSAPG) is disordered. Residues 345–354 (PTTTTTTSAP) show a composition bias toward low complexity. N377 carries N-linked (GlcNAc...) asparagine glycosylation.

It belongs to the peptidase C1 family.

It catalyses the reaction Broad endopeptidase specificity similar to that of cathepsin L.. Its activity is regulated as follows. Strongly inhibited by E-64 (L-trans-epoxysuccinylleucylamido(4-guanidino)butane), Leupeptin, and N-alpha-p-tosyl-L-lysine chloromethyl ketone. In terms of biological role, hydrolyzes chromogenic peptides at the carboxyl Arg or Lys; requires at least one more amino acid, preferably Arg, Phe, Val or Leu, between the terminal Arg or Lys and the amino-blocking group. Functionally, the cysteine protease may play an important role in the development and differentiation of the parasites at several stages of their life cycle. The chain is Cruzipain from Trypanosoma cruzi.